Consider the following 233-residue polypeptide: Large ribosomal subunit protein uL1 (233 aa).

This sequence belongs to the universal ribosomal protein uL1 family. As to quaternary structure, part of the 50S ribosomal subunit.

Functionally, binds directly to 23S rRNA. The L1 stalk is quite mobile in the ribosome, and is involved in E site tRNA release. In terms of biological role, protein L1 is also a translational repressor protein, it controls the translation of the L11 operon by binding to its mRNA. The sequence is that of Large ribosomal subunit protein uL1 from Shewanella halifaxensis (strain HAW-EB4).